The sequence spans 388 residues: MVSVEEIRKAQRAEGPATVMAIGTATPPNCVDQSTYPDYYFRITNSEHMTELKEKFKRMCDKSMIKKRYMYLNEEILKENPSVCAYMAPSLDARQDMVVMEVPKLGKEAATKAIKEWGQPKSKITHLIFCTTSGVDMPGADYQLTKLLGLRPSVKRYMMYQQGCFAGGTVLRLAKDLAENNKGARVLVVCSEITAVTFRGPTDTHLDSLVGQALFGDGAAAVIVGSDPLPVEKPLFQLVWTAQTILPDSEGAIDGHLREVGLTFHLLKDVPGLISKNIEKALVEAFQPLGISDYNSIFRIAHPGGPAILDQVEAKLGLKPEKMEATRHVLSEYGNMSSACVLFILDQMRKKSIENGLGTTGEGLDWGVLFGFGPGLTVETVVLRSVTV.

Residue C164 is part of the active site.

Belongs to the thiolase-like superfamily. Chalcone/stilbene synthases family.

It catalyses the reaction (E)-4-coumaroyl-CoA + 3 malonyl-CoA + 3 H(+) = 2',4,4',6'-tetrahydroxychalcone + 3 CO2 + 4 CoA. It participates in secondary metabolite biosynthesis; flavonoid biosynthesis. The primary product of this enzyme is 4,2',4',6'-tetrahydroxychalcone (also termed naringenin-chalcone or chalcone) which can under specific conditions spontaneously isomerize into naringenin. In Glycine max (Soybean), this protein is Chalcone synthase 2 (CHS2).